Consider the following 1666-residue polypeptide: Cortactin-binding protein 2 (1666 aa).

Disordered regions lie at residues 1–25 (MATDGASCEPDFARAPEDAAGAPAE), 202–224 (EKKRASGLEEELSGEKRRSAEME), 366–411 (IVSS…PAIQ), 457–481 (NANNDQDQNGNNTQSPPSRDVSPTS), and 501–619 (RFTS…PKPS). Residues 120–274 (KMQERMSTQL…MTEQLKRGND (155 aa)) adopt a coiled-coil conformation. Low complexity-rich tracts occupy residues 385-398 (GPSTSSGPDTPSST) and 457-468 (NANNDQDQNGNN). A compositionally biased stretch (polar residues) spans 469–481 (TQSPPSRDVSPTS). An Asymmetric dimethylarginine modification is found at R501. ANK repeat units lie at residues 712-742 (GRPTLLQQAAAQGNVTLLSMLLNEEGLDINH), 746-775 (DGHSALYSAAKNGHTDCVRLLLNAEAQVNA), 779-808 (DGFTPVCAAAAQGHVKCVELLVAYHANINH), 812-841 (EGQTPLYLACKNGNKECIKLLLEAGTDRSV), 845-874 (DGWTPVHAAVDTGSVDGLKLLLYHRAPACG), and 915-945 (EGWTAAHIAASKGFKNCLKILCRHGGLEPER). Position 1527 is a phosphoserine (S1527). Residues 1545-1566 (SESDISKIADTRDDLRRFDSSR) show a composition bias toward basic and acidic residues. Disordered stretches follow at residues 1545-1601 (SESD…RSNR) and 1620-1666 (RSKI…KPNQ). Residues 1585 to 1594 (KEVSPLSSHQ) are compositionally biased toward polar residues. The span at 1627–1641 (SQNTKRSSSSSNTRQ) shows a compositional bias: low complexity. Basic and acidic residues predominate over residues 1648 to 1666 (SKDEIWNLRNNEQIEKPNQ).

Interacts with CTTN/cortactin SH3 domain. Interacts with STRN, STRN4/zinedin and MOB4/phocein; this interactions mediate the association with the STRIPAK core complex and may regulate dendritic spine distribution of the STRIPAK complex in hippocampal neurons. Activation of glutamate receptors weakens the interaction with STRN and STRN4.

Its subcellular location is the cytoplasm. It localises to the cell cortex. The protein resides in the cell projection. It is found in the dendritic spine. In terms of biological role, regulates the dendritic spine distribution of CTTN/cortactin in hippocampal neurons, and thus controls dendritic spinogenesis and dendritic spine maintenance. Associates with the striatin-interacting phosphatase and kinase (STRIPAK) core complex to regulate dendritic spine distribution of the STRIPAK complex in hippocampal neurons. This Echinops telfairi (Lesser hedgehog tenrec) protein is Cortactin-binding protein 2 (CTTNBP2).